Here is a 595-residue protein sequence, read N- to C-terminus: Arginine--tRNA ligase (595 aa).

The 'HIGH' region motif lies at 132-142 (ANPTGPLHVGH).

The protein belongs to the class-I aminoacyl-tRNA synthetase family. As to quaternary structure, monomer.

The protein localises to the cytoplasm. The enzyme catalyses tRNA(Arg) + L-arginine + ATP = L-arginyl-tRNA(Arg) + AMP + diphosphate. This is Arginine--tRNA ligase from Cupriavidus taiwanensis (strain DSM 17343 / BCRC 17206 / CCUG 44338 / CIP 107171 / LMG 19424 / R1) (Ralstonia taiwanensis (strain LMG 19424)).